The following is a 307-amino-acid chain: Taste receptor type 2 member 106 (307 aa).

Over 1-7 (MLTIPEG) the chain is Extracellular. The helical transmembrane segment at 8 to 28 (ILLCFITSGSVLGVLGNGFIL) threads the bilayer. The Cytoplasmic portion of the chain corresponds to 29 to 41 (HVNCTDCVRQKFS). The helical transmembrane segment at 42-62 (TTGFIFTGLAISRICVICIII) threads the bilayer. The Extracellular portion of the chain corresponds to 63 to 81 (SDGYLKLFSPHMVASDAHI). Residues 82-104 (IGISYLWIITNHTSTCFATILNL) traverse the membrane as a helical segment. Topologically, residues 105–124 (FYFLKIANFSHYIFFCLKRK) are cytoplasmic. The helical transmembrane segment at 125 to 145 (LNTIFIFLLGCLFISWSVAFP) threads the bilayer. At 146 to 179 (QTVKIFNDKMKHRNTSWKFHLHKSKFIINHILLN) the chain is on the extracellular side. Asparagine 159 carries N-linked (GlcNAc...) asparagine glycosylation. A helical membrane pass occupies residues 180–200 (LGVIFFCMVAIITSFLLIISL). Over 201–227 (WKHNRKMQLYVSRFKSLNTEVHLKVMK) the chain is Cytoplasmic. Residues 228–248 (VLISFIILLILHVIGILIETL) traverse the membrane as a helical segment. Over 249–257 (SFLRYENKL) the chain is Extracellular. A helical transmembrane segment spans residues 258-278 (LLILGLNFSSMYPCCHSFILI). Residues 279–307 (LANNQLKQASLKALKQFKCHKKDKDVRET) lie on the Cytoplasmic side of the membrane.

It belongs to the G-protein coupled receptor T2R family.

It localises to the membrane. Functionally, putative taste receptor which may play a role in the perception of bitterness. The chain is Taste receptor type 2 member 106 from Rattus norvegicus (Rat).